A 398-amino-acid polypeptide reads, in one-letter code: Streptopain (398 aa).

The first 27 residues, M1–A27, serve as a signal peptide directing secretion. The propeptide occupies D28–K145. C192 (nucleophile) is an active-site residue. Residue C192 is modified to Cysteine methyl disulfide; in zymogen form. Residues S282 and G339 each coordinate a protein. The Proton acceptor role is filled by H340. Positions R368–Q390 are C-terminal active site loop.

Belongs to the peptidase C10 family. In terms of assembly, monomer. In terms of processing, the mature protease is derived from the precursor sequence by cleavage, either in cis via an autocatalytic mechanism, or in trans by mature SpeB or host proteases (trypsin, plasmin or subtilisin). Maturation can involve a number of protein cleavage intermediates. Mature SpeB probably plays the most important role in protein maturation in physiological conditions. Methylthiolation at Cys-192 of the inactive zymogen form is probably involved in the mechanism of secretion of the proteinase into the culture fluid.

Its subcellular location is the secreted. The protein resides in the host extracellular space. It localises to the host cytoplasm. The catalysed reaction is Preferential cleavage with hydrophobic residues at P2, P1 and P1'.. With respect to regulation, synthesized as an inactive zymogen to protect the intracellular components of the bacteria from proteolytic activity during protein production. Once secreted into the extracellular milieu, cleaved into the active protease: maturation can be mediated in cis by autocatalytic cleavage, or in trans by mature SpeB or host proteases. Protease activity is strongly inhibited by zinc and copper, which prevent its maturation into an active protease: inhibition by metal ions may be required to prevent proteolysis of streptococcal proteins. Its function is as follows. Cysteine protease that acts as a key streptococcal virulence factor by cleaving host proteins involved in immune response. Triggers inflammation by mediating cleavage of host proteins, which can both promote host pathogenesis by triggering sterile inflammation and/or restrict streptococcal infection, depending on host immune statue and infection site. Cleaves host gasdermin-A (GSDMA) in epithelial cells, promoting GSDMA activation and formation of gasdermin pores, triggering pyroptosis. Pyroptosis triggers the elimination of the infected skin cell, depriving the pathogen of its protective niche, while inducing an inflammatory response. This ultimately prevents bacterial penetration of the epithelial barrier and a subsequent systemic dissemination of the pathogen. Also mediates cleavage of the cytokine precursor interleukin-1 beta (IL1B) to its mature form, resulting in inflammation and septic shock. SpeB-mediated maturation of IL1B plays a dual role depending on infection site: while IL1B inflammatory response prevents bacterial growth during invasive skin infections, it promotes streptococcal infection of the nasopharynx by disrupting colonization resistance mediated by the microbiota. Inhibits host autophagy be catalyzing cleavage and inactivation of key autophagy factors, such as CALCOCO2, NBR1 and SQSTM1. Cleaves and inhibits a number of complement factors, such as C2, C3-beta chain of C3, C4, C5 or SERPING1, thereby promoting evasion of host immunity. May also impair adaptive immunity by catalyzing cleavage and degradation of host immunoglobulins to promote immune system evasion; the relevance of this activity is however unsure in vivo. Catalyzes maturation and release of the peptide hormone bradykinin from the precursor Kininogen-1 (KNG1) to produce hypotension during septic shock. Also involved in bacterial translocation across the host epithelial barrier by mediating cleavage and degradation of host epithelial junction proteins, such as CDH1 and OCLN. Additionally, has been involved in degradation of fibronectin and vitronectin, two host extracellular matrix proteins involved in tissue integrity. Also able to catalyze cleavage and degradation of streptococcal proteins, such as C5a peptidase, EndoS or SmeZ. Degradation of streptococcal proteins is however strictly regulated to preserve integrity of other virulence factors. The sequence is that of Streptopain from Streptococcus pyogenes serotype M1.